We begin with the raw amino-acid sequence, 394 residues long: Dual-specificity RNA methyltransferase RlmN (394 aa).

Residue E115 is the Proton acceptor of the active site. A Radical SAM core domain is found at 121–360; sequence EADRATLCVS…VIVRKTRGDD (240 aa). C128 and C365 form a disulfide bridge. [4Fe-4S] cluster-binding residues include C135, C139, and C142. S-adenosyl-L-methionine is bound by residues 189–190, S221, 243–245, and N322; these read GE and SLH. C365 functions as the S-methylcysteine intermediate in the catalytic mechanism.

It belongs to the radical SAM superfamily. RlmN family. [4Fe-4S] cluster serves as cofactor.

Its subcellular location is the cytoplasm. The catalysed reaction is adenosine(2503) in 23S rRNA + 2 reduced [2Fe-2S]-[ferredoxin] + 2 S-adenosyl-L-methionine = 2-methyladenosine(2503) in 23S rRNA + 5'-deoxyadenosine + L-methionine + 2 oxidized [2Fe-2S]-[ferredoxin] + S-adenosyl-L-homocysteine. It carries out the reaction adenosine(37) in tRNA + 2 reduced [2Fe-2S]-[ferredoxin] + 2 S-adenosyl-L-methionine = 2-methyladenosine(37) in tRNA + 5'-deoxyadenosine + L-methionine + 2 oxidized [2Fe-2S]-[ferredoxin] + S-adenosyl-L-homocysteine. Its function is as follows. Specifically methylates position 2 of adenine 2503 in 23S rRNA and position 2 of adenine 37 in tRNAs. m2A2503 modification seems to play a crucial role in the proofreading step occurring at the peptidyl transferase center and thus would serve to optimize ribosomal fidelity. The polypeptide is Dual-specificity RNA methyltransferase RlmN (Pasteurella multocida (strain Pm70)).